A 172-amino-acid chain; its full sequence is NADH-quinone oxidoreductase subunit B (172 aa).

4 residues coordinate [4Fe-4S] cluster: cysteine 52, cysteine 53, cysteine 117, and cysteine 147.

Belongs to the complex I 20 kDa subunit family. In terms of assembly, NDH-1 is composed of 14 different subunits. Subunits NuoB, C, D, E, F, and G constitute the peripheral sector of the complex. It depends on [4Fe-4S] cluster as a cofactor.

The protein resides in the cell inner membrane. The catalysed reaction is a quinone + NADH + 5 H(+)(in) = a quinol + NAD(+) + 4 H(+)(out). NDH-1 shuttles electrons from NADH, via FMN and iron-sulfur (Fe-S) centers, to quinones in the respiratory chain. Couples the redox reaction to proton translocation (for every two electrons transferred, four hydrogen ions are translocated across the cytoplasmic membrane), and thus conserves the redox energy in a proton gradient. This is NADH-quinone oxidoreductase subunit B from Ehrlichia ruminantium (strain Gardel).